The chain runs to 644 residues: Protein cueball (644 aa).

The first 26 residues, Met1–Gly26, serve as a signal peptide directing secretion. The Extracellular portion of the chain corresponds to Thr27–Ser531. 2 N-linked (GlcNAc...) asparagine glycosylation sites follow: Asn82 and Asn108. LDL-receptor class B repeat units follow at residues Met121 to Arg166, Arg167 to Ser211, and Asp212 to Ala257. N-linked (GlcNAc...) asparagine glycosylation is found at Asn175 and Asn190. The interval Thr280 to Pro301 is disordered. Positions Glu286–Pro301 are enriched in acidic residues. N-linked (GlcNAc...) asparagine glycosylation occurs at Asn313. 2 consecutive EGF-like domains span residues Glu398–Glu430 and Glu433–Glu471. 5 disulfides stabilise this stretch: Cys402–Cys411, Cys406–Cys421, Cys437–Cys447, Cys441–Cys459, and Cys461–Cys470. N-linked (GlcNAc...) asparagine glycans are attached at residues Asn473 and Asn508. Residues Ser532–Val552 traverse the membrane as a helical segment. Residues His553–Tyr644 are Cytoplasmic-facing.

Belongs to the cueball family.

It is found in the cell membrane. Functionally, has a role in spermatogenesis and oogenesis. The protein is Protein cueball of Drosophila sechellia (Fruit fly).